Here is a 574-residue protein sequence, read N- to C-terminus: Actin-binding protein wsp1 (574 aa).

Residues 19–130 (IPKSTNKIIA…KKVLDKGCHP (112 aa)) form the WH1 domain. Disordered stretches follow at residues 144–186 (KGSS…ELLN), 221–494 (AGTP…IAEL), and 517–574 (KSRK…DEWD). Residues 149 to 158 (HAPNNSNIQP) show a composition bias toward polar residues. 2 stretches are compositionally biased toward pro residues: residues 230–240 (PPIPPSIPSSR) and 251–260 (PAPPPIPPPS). Composition is skewed to low complexity over residues 297 to 306 (SRVSAAALAA) and 324 to 335 (KPPIGNGSSNSS). Pro residues predominate over residues 352 to 368 (PLPPQGRSAPPPPPPRS). Phosphoserine is present on serine 386. Residues 415–485 (PPVPTPPSLP…PPPAPAPAPA (71 aa)) show a composition bias toward pro residues. Residues 499–518 (GRANLMASIRASGGMDLLKS) form the WH2 domain. Residues 521–545 (VSASPSVASTKTSNPPVEAPPSNNL) are compositionally biased toward polar residues. Over residues 563-574 (SDEEDEDDDEWD) the composition is skewed to acidic residues.

As to quaternary structure, interacts with vrp1.

It is found in the cytoplasm. The protein resides in the cytoskeleton. Has a role in regulating actin assembly, so regulating polarized growth. The polypeptide is Actin-binding protein wsp1 (wsp1) (Schizosaccharomyces pombe (strain 972 / ATCC 24843) (Fission yeast)).